The chain runs to 434 residues: Septin-6 (434 aa).

N-acetylalanine is present on Ala2. Ser27 carries the post-translational modification Phosphoserine. A Septin-type G domain is found at 39–305 (QGFCFNILCV…ELYRRCKLEE (267 aa)). Positions 49–56 (GETGLGKS) are G1 motif. GTP-binding positions include 49–56 (GETGLGKS), Gly104, 185–193 (KADAISKSE), Gly239, and Arg254. Residues 101 to 104 (STVG) form a G3 motif region. The segment at 184–187 (AKAD) is G4 motif. Positions 321–409 (QETYEAKRNE…KTAAELLQSQ (89 aa)) form a coiled coil. Lys367 carries the N6-acetyllysine modification. A disordered region spans residues 405 to 434 (LLQSQGSQAGGSQTLKRDKEKKNNPWLCTE). The segment covering 407 to 417 (QSQGSQAGGSQ) has biased composition (low complexity). Ser416 is subject to Phosphoserine. Position 418 is a phosphothreonine (Thr418).

The protein belongs to the TRAFAC class TrmE-Era-EngA-EngB-Septin-like GTPase superfamily. Septin GTPase family. Septins polymerize into heterooligomeric protein complexes that form filaments, and associate with cellular membranes, actin filaments and microtubules. GTPase activity is required for filament formation. Filaments are assembled from asymmetrical heterotrimers, composed of SEPTIN2, SEPTIN6 and SEPTIN7 that associate head-to-head to form a hexameric unit. Within the trimer, directly interacts with SEPTIN2 and SEPTIN7. Also interacts with SEPTIN9 and SEPTIN12. Interaction with SEPTIN12 alters filament structure. Component of a septin core octameric complex consisting of SEPTIN12, SEPTIN7, SEPTIN6 and SEPTIN2 or SEPTIN4 in the order 12-7-6-2-2-6-7-12 or 12-7-6-4-4-6-7-12 and located in the sperm annulus. Interacts with SOCS7. Interacts with HNRNPA1. In terms of assembly, (Microbial infection) Interacts with HCV NS5B. In terms of tissue distribution, widely expressed.

The protein resides in the cytoplasm. It is found in the cytoskeleton. It localises to the spindle. Its subcellular location is the chromosome. The protein localises to the centromere. The protein resides in the kinetochore. It is found in the cleavage furrow. It localises to the midbody. Its subcellular location is the cell projection. The protein localises to the cilium. The protein resides in the flagellum. In terms of biological role, filament-forming cytoskeletal GTPase. Required for normal organization of the actin cytoskeleton. Involved in cytokinesis. May play a role in HCV RNA replication. Forms a filamentous structure with SEPTIN12, SEPTIN6, SEPTIN2 and probably SEPTIN4 at the sperm annulus which is required for the structural integrity and motility of the sperm tail during postmeiotic differentiation. The sequence is that of Septin-6 from Homo sapiens (Human).